We begin with the raw amino-acid sequence, 342 residues long: uncharacterized protein (342 aa).

L9–S31 contributes to the NADP(+) binding site. A substrate-binding site is contributed by S208. Residue Y222 is the Proton acceptor of the active site.

This sequence belongs to the short-chain dehydrogenases/reductases (SDR) family.

This is an uncharacterized protein from Acanthamoeba polyphaga (Amoeba).